Consider the following 250-residue polypeptide: Isoprenyl transferase (250 aa).

Aspartate 27 is a catalytic residue. A Mg(2+)-binding site is contributed by aspartate 27. Substrate contacts are provided by residues 28–31, tryptophan 32, histidine 48, and 76–78; these read GNRR and STE. Catalysis depends on asparagine 79, which acts as the Proton acceptor. Substrate is bound by residues phenylalanine 80, arginine 82, arginine 199, and 205–207; that span reads RVS. Residue glutamate 218 coordinates Mg(2+).

Belongs to the UPP synthase family. Homodimer. Mg(2+) is required as a cofactor.

Its function is as follows. Catalyzes the condensation of isopentenyl diphosphate (IPP) with allylic pyrophosphates generating different type of terpenoids. The protein is Isoprenyl transferase of Chlamydia caviae (strain ATCC VR-813 / DSM 19441 / 03DC25 / GPIC) (Chlamydophila caviae).